The chain runs to 294 residues: Tetraspanin-15 (294 aa).

The Cytoplasmic segment spans residues methionine 1–serine 23. Residues leucine 24–tyrosine 44 traverse the membrane as a helical segment. At alanine 45–proline 62 the chain is on the extracellular side. The helical transmembrane segment at alanine 63–alanine 83 threads the bilayer. Residues serine 84–serine 94 are Cytoplasmic-facing. The chain crosses the membrane as a helical span at residues phenylalanine 95–isoleucine 115. At phenylalanine 116–alanine 235 the chain is on the extracellular side. Asparagine 118 carries an N-linked (GlcNAc...) asparagine glycan. 4 cysteine pairs are disulfide-bonded: cysteine 154/cysteine 219, cysteine 155/cysteine 185, cysteine 171/cysteine 179, and cysteine 186/cysteine 198. 2 N-linked (GlcNAc...) asparagine glycosylation sites follow: asparagine 189 and asparagine 230. The chain crosses the membrane as a helical span at residues glycine 236 to isoleucine 256. The Cytoplasmic portion of the chain corresponds to threonine 257–aspartate 294.

It belongs to the tetraspanin (TM4SF) family. Interacts with ADAM10; the interaction influences ADAM10 substrate specificity, endocytosis and turnover. Palmitoylated.

It localises to the cell membrane. The protein localises to the late endosome membrane. Functionally, part of TspanC8 subgroup, composed of 6 members that interact with the transmembrane metalloprotease ADAM10. This interaction is required for ADAM10 exit from the endoplasmic reticulum and for enzymatic maturation and trafficking to the cell surface as well as substrate specificity. Different TspanC8/ADAM10 complexes have distinct substrates. Promotes ADAM10-mediated cleavage of CDH2. Negatively regulates ligand-induced Notch activity probably by regulating ADAM10 activity. In Mus musculus (Mouse), this protein is Tetraspanin-15 (Tspan15).